Consider the following 140-residue polypeptide: MLKEFKEFVSRGNVLDLAVGVIIGGAFTSIVKSLVNYLINPLIGLFIGGIDFSDWVLKVAGATFKFGSFINAVINFLIIAFVVFILVKLVNKFLPKKEEQEDDEAEAIENSEIYLKEIRDALVNNPELLSNLKNKEDSTK.

3 consecutive transmembrane segments (helical) span residues 14–34 (VLDLAVGVIIGGAFTSIVKSL), 37–57 (YLINPLIGLFIGGIDFSDWVL), and 66–86 (FGSFINAVINFLIIAFVVFIL).

The protein belongs to the MscL family. As to quaternary structure, homopentamer.

The protein localises to the cell membrane. Its function is as follows. Channel that opens in response to stretch forces in the membrane lipid bilayer. May participate in the regulation of osmotic pressure changes within the cell. The protein is Large-conductance mechanosensitive channel of Pediococcus pentosaceus (strain ATCC 25745 / CCUG 21536 / LMG 10740 / 183-1w).